A 141-amino-acid chain; its full sequence is VLSAADKANVKGVFSKIGGHADDYGAETLERMFIAYPQTKTYFPHFDLHHGSAQIKAHGKKVAAALVEAVNHIDDITGALSKLSDLHAQKLRVDPVNFKFLGHCFLVVVAIHHPAALTPEVHASLDKFMCAVGAVLTAKYR.

The Globin domain occupies 1–141 (VLSAADKANV…VGAVLTAKYR (141 aa)). An O2-binding site is contributed by H58. H87 provides a ligand contact to heme b.

It belongs to the globin family. In terms of assembly, heterotetramer of two alpha chains and two beta chains. As to expression, red blood cells.

Its function is as follows. Involved in oxygen transport from the lung to the various peripheral tissues. The protein is Hemoglobin subunit alpha-A (HBAA) of Chloephaga melanoptera (Andean goose).